A 683-amino-acid polypeptide reads, in one-letter code: DNA ligase 2 (683 aa).

Residues 27-31, 76-77, and Glu-106 each bind NAD(+); these read DGEFD and SL. Residue Lys-108 is the N6-AMP-lysine intermediate of the active site. Arg-129, Glu-169, Lys-285, and Lys-309 together coordinate NAD(+). Cys-403, Cys-406, Cys-422, and Cys-428 together coordinate Zn(2+). The 90-residue stretch at 592–681 folds into the BRCT domain; it reads SIERTLEGLS…PAAVAAEEPE (90 aa).

This sequence belongs to the NAD-dependent DNA ligase family. LigA subfamily. It depends on Mg(2+) as a cofactor. The cofactor is Mn(2+).

The catalysed reaction is NAD(+) + (deoxyribonucleotide)n-3'-hydroxyl + 5'-phospho-(deoxyribonucleotide)m = (deoxyribonucleotide)n+m + AMP + beta-nicotinamide D-nucleotide.. Functionally, DNA ligase that catalyzes the formation of phosphodiester linkages between 5'-phosphoryl and 3'-hydroxyl groups in double-stranded DNA using NAD as a coenzyme and as the energy source for the reaction. It is essential for DNA replication and repair of damaged DNA. This chain is DNA ligase 2, found in Nocardia farcinica (strain IFM 10152).